Here is a 330-residue protein sequence, read N- to C-terminus: Aspartate--ammonia ligase (330 aa).

Belongs to the class-II aminoacyl-tRNA synthetase family. AsnA subfamily.

The protein localises to the cytoplasm. It carries out the reaction L-aspartate + NH4(+) + ATP = L-asparagine + AMP + diphosphate + H(+). The protein operates within amino-acid biosynthesis; L-asparagine biosynthesis; L-asparagine from L-aspartate (ammonia route): step 1/1. The protein is Aspartate--ammonia ligase of Histophilus somni (strain 2336) (Haemophilus somnus).